The primary structure comprises 134 residues: Large ribosomal subunit protein eL28 (134 aa).

Serine 60 is modified (phosphoserine).

It belongs to the eukaryotic ribosomal protein eL28 family. In terms of assembly, component of the large ribosomal subunit (LSU). Mature yeast ribosomes consist of a small (40S) and a large (60S) subunit. The 40S small subunit contains 1 molecule of ribosomal RNA (18S rRNA) and at least 33 different proteins. The large 60S subunit contains 3 rRNA molecules (25S, 5.8S and 5S rRNA) and at least 46 different proteins.

It is found in the cytoplasm. In terms of biological role, component of the ribosome, a large ribonucleoprotein complex responsible for the synthesis of proteins in the cell. The small ribosomal subunit (SSU) binds messenger RNAs (mRNAs) and translates the encoded message by selecting cognate aminoacyl-transfer RNA (tRNA) molecules. The large subunit (LSU) contains the ribosomal catalytic site termed the peptidyl transferase center (PTC), which catalyzes the formation of peptide bonds, thereby polymerizing the amino acids delivered by tRNAs into a polypeptide chain. The nascent polypeptides leave the ribosome through a tunnel in the LSU and interact with protein factors that function in enzymatic processing, targeting, and the membrane insertion of nascent chains at the exit of the ribosomal tunnel. The protein is Large ribosomal subunit protein eL28 (rpl44) of Schizosaccharomyces pombe (strain 972 / ATCC 24843) (Fission yeast).